Here is a 185-residue protein sequence, read N- to C-terminus: Dual-action ribosomal maturation protein DarP (185 aa).

Residues 1-22 (MWKNGAMRGCNKETGEFLGPSR) are disordered.

It belongs to the DarP family.

It localises to the cytoplasm. Member of a network of 50S ribosomal subunit biogenesis factors which assembles along the 30S-50S interface, preventing incorrect 23S rRNA structures from forming. Promotes peptidyl transferase center (PTC) maturation. The sequence is that of Dual-action ribosomal maturation protein DarP from Xylella fastidiosa (strain 9a5c).